The chain runs to 353 residues: UDP-galactose transporter (353 aa).

6 consecutive transmembrane segments (helical) span residues 147–167 (LGPM…IVQL), 184–204 (VTGF…GVYF), 215–235 (LWVR…FTIL), 254–274 (IVWL…LCVA), 279–299 (IMKN…SVYL), and 302–322 (FKIS…TFLY). The disordered stretch occupies residues 325-353 (PESKPSPSRGTYIPMTTQDAAAKDVDHKH). Residues 329-343 (PSPSRGTYIPMTTQD) are compositionally biased toward polar residues.

It belongs to the nucleotide-sugar transporter family. SLC35A subfamily.

The protein localises to the golgi apparatus membrane. Its function is as follows. Essential for the transport of UDP-galactose into the lumen of Golgi apparatus. This chain is UDP-galactose transporter (gms1), found in Schizosaccharomyces pombe (strain 972 / ATCC 24843) (Fission yeast).